The primary structure comprises 278 residues: Ribosomal RNA small subunit methyltransferase A (278 aa).

Positions 27, 29, 54, 75, 95, and 118 each coordinate S-adenosyl-L-methionine.

The protein belongs to the class I-like SAM-binding methyltransferase superfamily. rRNA adenine N(6)-methyltransferase family. RsmA subfamily.

It is found in the cytoplasm. It catalyses the reaction adenosine(1518)/adenosine(1519) in 16S rRNA + 4 S-adenosyl-L-methionine = N(6)-dimethyladenosine(1518)/N(6)-dimethyladenosine(1519) in 16S rRNA + 4 S-adenosyl-L-homocysteine + 4 H(+). Specifically dimethylates two adjacent adenosines (A1518 and A1519) in the loop of a conserved hairpin near the 3'-end of 16S rRNA in the 30S particle. May play a critical role in biogenesis of 30S subunits. The chain is Ribosomal RNA small subunit methyltransferase A from Chlamydia abortus (strain DSM 27085 / S26/3) (Chlamydophila abortus).